A 546-amino-acid polypeptide reads, in one-letter code: Carboxypeptidase Y homolog A (546 aa).

Positions 1-17 are cleaved as a signal peptide; it reads MKLLASTVLMGAAAASI. A propeptide spanning residues 18–132 is cleaved from the precursor; that stretch reads APQQQVLKNP…KLEKYNMRAK (115 aa). Intrachain disulfides connect Cys186-Cys426, Cys320-Cys334, Cys344-Cys367, Cys351-Cys360, and Cys389-Cys396. N-linked (GlcNAc...) asparagine glycosylation is present at Asn217. The active site involves Ser273. The active site involves Asp465. The N-linked (GlcNAc...) asparagine glycan is linked to Asn512. Residue His523 is part of the active site.

It belongs to the peptidase S10 family.

The protein resides in the vacuole. It catalyses the reaction Release of a C-terminal amino acid with broad specificity.. Functionally, vacuolar carboxypeptidase involved in degradation of small peptides. Digests preferentially peptides containing an aliphatic or hydrophobic residue in P1' position, as well as methionine, leucine or phenylalanine in P1 position of ester substrate. The sequence is that of Carboxypeptidase Y homolog A (cpyA) from Sclerotinia sclerotiorum (strain ATCC 18683 / 1980 / Ss-1) (White mold).